Consider the following 24-residue polypeptide: MNVQFTVNGRAASIDVPPNTLLVQ.

In terms of assembly, heterotrimer composed of an alpha, a beta and a gamma chain. [2Fe-2S] cluster serves as cofactor.

The catalysed reaction is an aldehyde + a quinone + H2O = a quinol + a carboxylate + H(+). The chain is Aldehyde dehydrogenase gamma chain from Comamonas testosteroni (Pseudomonas testosteroni).